Consider the following 238-residue polypeptide: MHFEPALDCALLQKRYKRFLADVTYQSGDTGTIHCANTGAMTGCATPGDKVWYSTSNNTKRKYPHSWEITETQQGHLICVNTIRANQLTVEAIEQGWIKELSGYEQLQTEVKYGHENSRIDILLSASDRPACYIEVKSVTLLDDTEPGQGFFPDAVTTRGQKHLRELTEMAQNGSRAILLFAVLHSGIEKVAAALHIDAKYSQLLKQAQKAGVEVLCYKAEISNTEIKLNSAIAFNNS.

It belongs to the SfsA family.

The polypeptide is Sugar fermentation stimulation protein homolog (Vibrio vulnificus (strain YJ016)).